Consider the following 307-residue polypeptide: MTAPHPLLTLTDEVADALRDGAPVVALESTIISHGMPYPQNVAMATEVEGIIRAAGAVPATIAVLEGRPRIGLTADDLELLASDEDVAKVSVRDLPFVVARRSHGATTVAATMRLAALAGIRVFVTGGLGGVHRGAQQSFDESADLTELGSTDVAVISAGVKSILDIGLTLERLETLGVPVLAYGSDEFPSFYSRSSGHAAPMRVDSAAEVAAVMAAKWDLGIAGGVVVANPIPEADEIPADEIGGIIEQALADMAARGIHGNEATPYLLGRIVEITGGASLTANIALVRANARLGASIAREYAGLR.

Residue Glu28 is the Proton donor of the active site. Substrate contacts are provided by Lys89 and Val109. Asp141 is a binding site for Mn(2+). 143 to 145 (SAD) is a binding site for substrate. Lys162 functions as the Nucleophile in the catalytic mechanism.

The protein belongs to the pseudouridine-5'-phosphate glycosidase family. Homotrimer. Mn(2+) is required as a cofactor.

It catalyses the reaction D-ribose 5-phosphate + uracil = psi-UMP + H2O. In terms of biological role, catalyzes the reversible cleavage of pseudouridine 5'-phosphate (PsiMP) to ribose 5-phosphate and uracil. Functions biologically in the cleavage direction, as part of a pseudouridine degradation pathway. In Nocardioides sp. (strain ATCC BAA-499 / JS614), this protein is Pseudouridine-5'-phosphate glycosidase.